The sequence spans 507 residues: Glycogen synthase (507 aa).

K15 lines the ADP-alpha-D-glucose pocket.

Belongs to the glycosyltransferase 1 family. Bacterial/plant glycogen synthase subfamily.

It catalyses the reaction [(1-&gt;4)-alpha-D-glucosyl](n) + ADP-alpha-D-glucose = [(1-&gt;4)-alpha-D-glucosyl](n+1) + ADP + H(+). Its pathway is glycan biosynthesis; glycogen biosynthesis. Its function is as follows. Synthesizes alpha-1,4-glucan chains using ADP-glucose. This is Glycogen synthase from Rhodopirellula baltica (strain DSM 10527 / NCIMB 13988 / SH1).